The following is a 106-amino-acid chain: Iron-sulfur cluster assembly protein CyaY (106 aa).

Belongs to the frataxin family. In terms of assembly, interacts with IscS. Certain pairs of proteins can bind simultaneously to IscS; IscS-IscU-CyaY complexes can be isolated in vitro, but (IscS-TusA-CyaY) complexes cannot.

In terms of biological role, involved in iron-sulfur (Fe-S) cluster assembly. May act as a regulator of Fe-S biogenesis. This chain is Iron-sulfur cluster assembly protein CyaY, found in Escherichia coli O157:H7.